The primary structure comprises 481 residues: MADKITSREADYSQWYIDLVRSAKLADYSDVRGCMVIRPNGYAVWEKMQAALDRMFKETGHVNAYFPLFIPESFIAKEAEHIEGFAPECAVVTHGGGEELAEKLYVRPTSETIIWSSYKKWIQSYRDLPLLINQWANVVRWEMRTRLFLRTTEFLWQEGHTAHATPEESQEEVMRMIRVYKTFAEEYMAMPVIMGRKTDSEKFAGADETYCIEAMMQDGKALQAGTSHNLGQNFAKAFDCQFQTKEGVLDYVWATSWGVSTRLIGALIMAHSDDRGLVLPPKLATRQVVIIPILRGDKAAVLAKAESMAAELKENGIPAFVDDSEQNSPGWKFAEYELQGIPVRIEVGPRDIDKGVCIAARRDTLEKTELQLDATLAVQVSGMLSAMQADMFQKALRFREENTREVTDYETFKSAVEEGFVIAHWDGTAETEEKIKEETRATIRVLPEESDYREHYHMDEPGVCIFSGKPSSQKVVFAKAY.

Belongs to the class-II aminoacyl-tRNA synthetase family. ProS type 3 subfamily. In terms of assembly, homodimer.

The protein resides in the cytoplasm. The catalysed reaction is tRNA(Pro) + L-proline + ATP = L-prolyl-tRNA(Pro) + AMP + diphosphate. In terms of biological role, catalyzes the attachment of proline to tRNA(Pro) in a two-step reaction: proline is first activated by ATP to form Pro-AMP and then transferred to the acceptor end of tRNA(Pro). The protein is Proline--tRNA ligase of Chlorobium phaeovibrioides (strain DSM 265 / 1930) (Prosthecochloris vibrioformis (strain DSM 265)).